A 468-amino-acid chain; its full sequence is Probable Xaa-Pro aminopeptidase PEPP (468 aa).

Mn(2+) contacts are provided by Asp264, Asp275, Glu398, and Glu438.

The protein belongs to the peptidase M24B family. Mn(2+) serves as cofactor.

It catalyses the reaction Release of any N-terminal amino acid, including proline, that is linked to proline, even from a dipeptide or tripeptide.. In terms of biological role, catalyzes the removal of a penultimate prolyl residue from the N-termini of peptides. The protein is Probable Xaa-Pro aminopeptidase PEPP (PEPP) of Paracoccidioides brasiliensis (strain Pb18).